The chain runs to 403 residues: SEC14-like protein 2 (403 aa).

Lys11 and Lys51 each carry N6-succinyllysine. The CRAL-TRIO domain maps to 76–249 (PPEVIQQYLS…EYGGTMTDPD (174 aa)). Lys253 and Lys257 each carry N6-succinyllysine. Residues 275–383 (KQQYEHSVQI…AKKVSFTVEV (109 aa)) enclose the GOLD domain. The residue at position 393 (Lys393) is an N6-succinyllysine.

As to quaternary structure, monomer. As to expression, widely expressed. High expression in liver and small intestine.

It is found in the cytoplasm. It localises to the nucleus. Carrier protein. Binds to some hydrophobic molecules and promotes their transfer between the different cellular sites. Binds with high affinity to alpha-tocopherol. Also binds with a weaker affinity to other tocopherols and to tocotrienols. May have a transcriptional activatory activity via its association with alpha-tocopherol. Probably recognizes and binds some squalene structure, suggesting that it may regulate cholesterol biosynthesis by increasing the transfer of squalene to a metabolic active pool in the cell. The polypeptide is SEC14-like protein 2 (Sec14l2) (Rattus norvegicus (Rat)).